Consider the following 140-residue polypeptide: FLYWCH family member 2 (140 aa).

Disordered regions lie at residues 1 to 39 (MPLPEPSEQEGESVKASQEPSPKPGTEVIPAAPRKPRKF) and 84 to 140 (HPEA…GKSL). The residue at position 21 (serine 21) is a Phosphoserine. The segment covering 98 to 114 (PEQKRSRQDPGTDRTED) has biased composition (basic and acidic residues). Residues 118 to 127 (AAGPPEAAGE) show a composition bias toward low complexity.

This is FLYWCH family member 2 (FLYWCH2) from Homo sapiens (Human).